The following is an 81-amino-acid chain: ATP synthase subunit c, chloroplastic (81 aa).

A run of 2 helical transmembrane segments spans residues 3–23 (PLVF…ASIG) and 57–77 (LAFM…LLFA).

The protein belongs to the ATPase C chain family. As to quaternary structure, F-type ATPases have 2 components, F(1) - the catalytic core - and F(0) - the membrane proton channel. F(1) has five subunits: alpha(3), beta(3), gamma(1), delta(1), epsilon(1). F(0) has four main subunits: a(1), b(1), b'(1) and c(10-14). The alpha and beta chains form an alternating ring which encloses part of the gamma chain. F(1) is attached to F(0) by a central stalk formed by the gamma and epsilon chains, while a peripheral stalk is formed by the delta, b and b' chains.

It is found in the plastid. The protein resides in the chloroplast thylakoid membrane. F(1)F(0) ATP synthase produces ATP from ADP in the presence of a proton or sodium gradient. F-type ATPases consist of two structural domains, F(1) containing the extramembraneous catalytic core and F(0) containing the membrane proton channel, linked together by a central stalk and a peripheral stalk. During catalysis, ATP synthesis in the catalytic domain of F(1) is coupled via a rotary mechanism of the central stalk subunits to proton translocation. Its function is as follows. Key component of the F(0) channel; it plays a direct role in translocation across the membrane. A homomeric c-ring of between 10-14 subunits forms the central stalk rotor element with the F(1) delta and epsilon subunits. The sequence is that of ATP synthase subunit c, chloroplastic from Atropa belladonna (Belladonna).